A 326-amino-acid polypeptide reads, in one-letter code: High-affinity zinc uptake system protein ZnuA (326 aa).

An N-terminal signal peptide occupies residues 1–22; it reads MIRPSSLVLAAALGTAALPARA. His59 is a binding site for Zn(2+). Residues 117 to 155 show a composition bias toward basic and acidic residues; it reads GGEHEHEHEHEHEHEHEHEHDGHGHAEEQAHHDHDHSGT. Positions 117–161 are disordered; that stretch reads GGEHEHEHEHEHEHEHEHEHDGHGHAEEQAHHDHDHSGTDPHAWL. 3 residues coordinate Zn(2+): His158, His222, and Asp295. Cys267 and Cys322 are joined by a disulfide.

Belongs to the bacterial solute-binding protein 9 family. As to quaternary structure, monomer.

It localises to the periplasm. Its function is as follows. Part of the ATP-binding cassette (ABC) transport system ZnuABC involved in zinc import. Binds zinc with high affinity and specificity and delivers it to the membrane permease for translocation into the cytoplasm. The protein is High-affinity zinc uptake system protein ZnuA of Paracoccus denitrificans (strain Pd 1222).